Consider the following 556-residue polypeptide: Putative solute carrier family 22 member 31 (556 aa).

At 1-23 (MEQEARVLRAAGGFGRARRLLAS) the chain is on the cytoplasmic side. Residues 24 to 44 (ASWVPCIVLGLVLSSEELLTA) traverse the membrane as a helical segment. Over 45–128 (QPAPHCRPDP…WNLVCGDGWK (84 aa)) the chain is Extracellular. A helical transmembrane segment spans residues 129–149 (VPLEQVSHLLGWLLGCVILGA). The Cytoplasmic portion of the chain corresponds to 150-157 (GCDRFGRR). The helical transmembrane segment at 158–178 (AVFVASLVLTTGLGASEALAA) threads the bilayer. The Extracellular segment spans residues 179 to 182 (SFPT). The helical transmembrane segment at 183 to 203 (LLVLRLLHGGTLAGALLALYL) threads the bilayer. Residues 204–218 (ARLELCDPPHRLAFS) lie on the Cytoplasmic side of the membrane. A helical membrane pass occupies residues 219–239 (MGAGLFSVVGTLLLPGLAALV). The Extracellular portion of the chain corresponds to 240–246 (QDWRLLQ). The chain crosses the membrane as a helical span at residues 247-267 (GLGALMSGLLLLFWGFPALFP). Residues 268 to 339 (ESPCWLLATG…LRTRVTWRNG (72 aa)) are Cytoplasmic-facing. Residues 340-357 (LILGFSSLVGGGIRASFR) form a helical membrane-spanning segment. Topologically, residues 358–366 (RSLAPQVPT) are extracellular. The chain crosses the membrane as a helical span at residues 367–387 (FYLPYFLEAGLEAAALVFLLL). Over 388–395 (TADCCGRR) the chain is Cytoplasmic. A helical membrane pass occupies residues 396–416 (PVLLLGTMVTGLASLLLLAGA). Residues 417-420 (QYLP) lie on the Extracellular side of the membrane. A helical transmembrane segment spans residues 421-441 (GWTVLFLSVLGLLASRAVSAL). Residues 442–448 (SSLFAAE) are Cytoplasmic-facing. A helical membrane pass occupies residues 449–469 (VFPTVIRGAGLGLVLGAGFLG). The Extracellular portion of the chain corresponds to 470 to 483 (QAAGPLDTLHGRQG). A helical transmembrane segment spans residues 484-504 (FFLQQVVFASLAVLALLCVLL). Over 505–556 (LPESRSRGLPQSLQDADRLRRSPLLRGRPRQDHLPLLPPSNSYWAGHTPEQH) the chain is Cytoplasmic. The segment at 524–556 (RRSPLLRGRPRQDHLPLLPPSNSYWAGHTPEQH) is disordered.

The protein belongs to the major facilitator (TC 2.A.1) superfamily. Organic cation transporter (TC 2.A.1.19) family.

It localises to the membrane. In terms of biological role, organic anion transporter that mediates the uptake of ions. This chain is Putative solute carrier family 22 member 31, found in Homo sapiens (Human).